A 172-amino-acid chain; its full sequence is Adenine phosphoribosyltransferase (172 aa).

It belongs to the purine/pyrimidine phosphoribosyltransferase family. In terms of assembly, homodimer.

The protein localises to the cytoplasm. The enzyme catalyses AMP + diphosphate = 5-phospho-alpha-D-ribose 1-diphosphate + adenine. The protein operates within purine metabolism; AMP biosynthesis via salvage pathway; AMP from adenine: step 1/1. Its function is as follows. Catalyzes a salvage reaction resulting in the formation of AMP, that is energically less costly than de novo synthesis. In Prochlorococcus marinus (strain NATL1A), this protein is Adenine phosphoribosyltransferase.